Reading from the N-terminus, the 348-residue chain is UPF0324 membrane protein BPP3732 (348 aa).

10 consecutive transmembrane segments (helical) span residues 20–39 (GILFVALMAAAVVQLADLPF), 43–62 (FGFSPLVVGIVCGMLYGNFL), 98–120 (IAAVGLPGLAVSVGVVASTLLIG), 135–157 (AMLTAAGSAICGAAAVLAFEPTL), 164–186 (SAVAVATVVLFGTLSMFLYPVIY), 196–215 (QALGIYIGGTVHEVAQVVGA), 235–257 (VALLVPVLLVLGFWLRASAAAGA), 267–286 (VPWFAIGFLVLAIVNSLDIL), 299–318 (VFVLTMAMTALGIETRFAQI), and 322–344 (GPRVMALGLVLYAWLVFGGYGIV).

The protein belongs to the UPF0324 family.

It localises to the cell membrane. This chain is UPF0324 membrane protein BPP3732, found in Bordetella parapertussis (strain 12822 / ATCC BAA-587 / NCTC 13253).